Reading from the N-terminus, the 441-residue chain is Serine--tRNA ligase (441 aa).

Residue 250-252 (TSE) coordinates L-serine. ATP is bound by residues 281–283 (RRE) and valine 297. Glutamate 304 serves as a coordination point for L-serine. 368–371 (EIVS) provides a ligand contact to ATP. Threonine 402 contacts L-serine.

The protein belongs to the class-II aminoacyl-tRNA synthetase family. Type-1 seryl-tRNA synthetase subfamily. As to quaternary structure, homodimer. The tRNA molecule binds across the dimer.

Its subcellular location is the cytoplasm. The catalysed reaction is tRNA(Ser) + L-serine + ATP = L-seryl-tRNA(Ser) + AMP + diphosphate + H(+). It carries out the reaction tRNA(Sec) + L-serine + ATP = L-seryl-tRNA(Sec) + AMP + diphosphate + H(+). It functions in the pathway aminoacyl-tRNA biosynthesis; selenocysteinyl-tRNA(Sec) biosynthesis; L-seryl-tRNA(Sec) from L-serine and tRNA(Sec): step 1/1. Functionally, catalyzes the attachment of serine to tRNA(Ser). Is also able to aminoacylate tRNA(Sec) with serine, to form the misacylated tRNA L-seryl-tRNA(Sec), which will be further converted into selenocysteinyl-tRNA(Sec). This is Serine--tRNA ligase from Thermoplasma acidophilum (strain ATCC 25905 / DSM 1728 / JCM 9062 / NBRC 15155 / AMRC-C165).